The primary structure comprises 511 residues: ATP synthase subunit alpha (511 aa).

169–176 (GDRQTGKT) serves as a coordination point for ATP.

Belongs to the ATPase alpha/beta chains family. In terms of assembly, F-type ATPases have 2 components, CF(1) - the catalytic core - and CF(0) - the membrane proton channel. CF(1) has five subunits: alpha(3), beta(3), gamma(1), delta(1), epsilon(1). CF(0) has three main subunits: a(1), b(2) and c(9-12). The alpha and beta chains form an alternating ring which encloses part of the gamma chain. CF(1) is attached to CF(0) by a central stalk formed by the gamma and epsilon chains, while a peripheral stalk is formed by the delta and b chains.

Its subcellular location is the cell inner membrane. It carries out the reaction ATP + H2O + 4 H(+)(in) = ADP + phosphate + 5 H(+)(out). In terms of biological role, produces ATP from ADP in the presence of a proton gradient across the membrane. The alpha chain is a regulatory subunit. The sequence is that of ATP synthase subunit alpha from Bartonella bacilliformis (strain ATCC 35685 / KC583 / Herrer 020/F12,63).